A 155-amino-acid polypeptide reads, in one-letter code: Protein-export protein SecB (155 aa).

Belongs to the SecB family. In terms of assembly, homotetramer, a dimer of dimers. One homotetramer interacts with 1 SecA dimer.

Its subcellular location is the cytoplasm. One of the proteins required for the normal export of preproteins out of the cell cytoplasm. It is a molecular chaperone that binds to a subset of precursor proteins, maintaining them in a translocation-competent state. It also specifically binds to its receptor SecA. The polypeptide is Protein-export protein SecB (Methylococcus capsulatus (strain ATCC 33009 / NCIMB 11132 / Bath)).